Consider the following 401-residue polypeptide: Probable tRNA sulfurtransferase (401 aa).

The THUMP domain occupies 60–165; that stretch reads EPIIDKLKNV…QEGTYITCHD (106 aa). Residues 183-184, 208-209, Arg-265, Gly-287, and Gln-296 each bind ATP; these read ML and HF.

This sequence belongs to the ThiI family.

It is found in the cytoplasm. It catalyses the reaction [ThiI sulfur-carrier protein]-S-sulfanyl-L-cysteine + a uridine in tRNA + 2 reduced [2Fe-2S]-[ferredoxin] + ATP + H(+) = [ThiI sulfur-carrier protein]-L-cysteine + a 4-thiouridine in tRNA + 2 oxidized [2Fe-2S]-[ferredoxin] + AMP + diphosphate. The catalysed reaction is [ThiS sulfur-carrier protein]-C-terminal Gly-Gly-AMP + S-sulfanyl-L-cysteinyl-[cysteine desulfurase] + AH2 = [ThiS sulfur-carrier protein]-C-terminal-Gly-aminoethanethioate + L-cysteinyl-[cysteine desulfurase] + A + AMP + 2 H(+). Its pathway is cofactor biosynthesis; thiamine diphosphate biosynthesis. In terms of biological role, catalyzes the ATP-dependent transfer of a sulfur to tRNA to produce 4-thiouridine in position 8 of tRNAs, which functions as a near-UV photosensor. Also catalyzes the transfer of sulfur to the sulfur carrier protein ThiS, forming ThiS-thiocarboxylate. This is a step in the synthesis of thiazole, in the thiamine biosynthesis pathway. The sulfur is donated as persulfide by IscS. The chain is Probable tRNA sulfurtransferase from Geobacillus sp. (strain WCH70).